We begin with the raw amino-acid sequence, 279 residues long: Acyl-[acyl-carrier-protein]--UDP-N-acetylglucosamine O-acyltransferase (279 aa).

This sequence belongs to the transferase hexapeptide repeat family. LpxA subfamily. As to quaternary structure, homotrimer.

It localises to the cytoplasm. The catalysed reaction is a (3R)-hydroxyacyl-[ACP] + UDP-N-acetyl-alpha-D-glucosamine = a UDP-3-O-[(3R)-3-hydroxyacyl]-N-acetyl-alpha-D-glucosamine + holo-[ACP]. It functions in the pathway glycolipid biosynthesis; lipid IV(A) biosynthesis; lipid IV(A) from (3R)-3-hydroxytetradecanoyl-[acyl-carrier-protein] and UDP-N-acetyl-alpha-D-glucosamine: step 1/6. Its function is as follows. Involved in the biosynthesis of lipid A, a phosphorylated glycolipid that anchors the lipopolysaccharide to the outer membrane of the cell. In Chlamydia pneumoniae (Chlamydophila pneumoniae), this protein is Acyl-[acyl-carrier-protein]--UDP-N-acetylglucosamine O-acyltransferase.